A 61-amino-acid chain; its full sequence is Metallothionein-2 (61 aa).

N-acetylmethionine is present on methionine 1. The interval 1–29 (MDPNCSCATDGSCSCSGSCKCKECKCTTC) is beta. Cysteine 5, cysteine 7, cysteine 13, cysteine 15, cysteine 19, cysteine 21, cysteine 24, cysteine 26, cysteine 29, cysteine 33, cysteine 34, cysteine 36, cysteine 37, cysteine 41, cysteine 44, cysteine 48, cysteine 50, and cysteine 57 together coordinate a divalent metal cation. Residues 30–61 (KKSCCSCCPVGCAKCSQGCVCKEASEKCSCCA) form an alpha region. Serine 58 is subject to Phosphoserine. Cysteine 59 and cysteine 60 together coordinate a divalent metal cation.

It belongs to the metallothionein superfamily. Type 1 family.

Metallothioneins have a high content of cysteine residues that bind various heavy metals; these proteins are transcriptionally regulated by both heavy metals and glucocorticoids. The protein is Metallothionein-2 (MT2) of Mesocricetus auratus (Golden hamster).